Reading from the N-terminus, the 260-residue chain is MKVRTLTAIIALIVFLPILLKGGLVLMIFANILALIALKELLNMNMIKFVSVPGLISAVGLIIIMLPQHAGPWVQVIQLKSLIAMSFIVLSYTVLSKNRFSFMDAAFCLMSVAYVGIGFMFFYETRSEGLHYILYAFLIVWLTDTGAYLFGKMMGKHKLWPVISPNKTIEGFIGGLFCSLIVPLAMLYFVDFNMNVWILLGVTLILSLFGQLGDLVESGFKRHFGVKDSGRILPGHGGILDRFDSFMFVLPLLNILLIQS.

7 consecutive transmembrane segments (helical) span residues 9-29 (IIALIVFLPILLKGGLVLMIF), 46-66 (MIKFVSVPGLISAVGLIIIML), 70-90 (AGPWVQVIQLKSLIAMSFIVL), 102-122 (FMDAAFCLMSVAYVGIGFMFF), 130-150 (LHYILYAFLIVWLTDTGAYLF), 172-192 (FIGGLFCSLIVPLAMLYFVDF), and 196-216 (VWILLGVTLILSLFGQLGDLV).

Belongs to the CDS family.

Its subcellular location is the cell membrane. It carries out the reaction a 1,2-diacyl-sn-glycero-3-phosphate + CTP + H(+) = a CDP-1,2-diacyl-sn-glycerol + diphosphate. Its pathway is phospholipid metabolism; CDP-diacylglycerol biosynthesis; CDP-diacylglycerol from sn-glycerol 3-phosphate: step 3/3. The polypeptide is Phosphatidate cytidylyltransferase (cdsA) (Staphylococcus aureus (strain COL)).